The chain runs to 888 residues: Serine/arginine repetitive matrix protein 1 (888 aa).

A PWI domain is found at 27 to 126; sequence QLKFAECLEK…AGIPTAFLEL (100 aa). Residues 139 to 169 are compositionally biased toward basic and acidic residues; the sequence is EKLASMKKQDEDKEKRDKEDKDNREKRDRSR. Residues 139 to 888 are disordered; sequence EKLASMKKQD…MRKAQVSPPS (750 aa). Over residues 170–206 the composition is skewed to basic residues; sequence SPRRRKSRSPSPRRRSSPIRRERKRSHSRSPHHRTKS. Basic and acidic residues-rich tracts occupy residues 213 to 232 and 254 to 276; these read PEKK…KETV and ETKE…EKTR. Basic residues-rich tracts occupy residues 277–325 and 332–347; these read QRSP…RTPP and PRHR…RRRS. Composition is skewed to low complexity over residues 348–364 and 473–496; these read SASL…SRSR and SVQQ…SSSS. 2 stretches are compositionally biased toward basic residues: residues 528–554 and 561–585; these read PRKR…RRRS and PRRR…RSPS. Residues 586 to 598 show a composition bias toward low complexity; that stretch reads PRRYSPPIQRRYS. 2 stretches are compositionally biased toward basic residues: residues 614–629 and 642–656; these read PKRR…RRVS and AKRR…HRKG. Residues 662–677 are compositionally biased toward basic and acidic residues; sequence SNRETRSPPQNKRDSP. Low complexity-rich tracts occupy residues 697-712, 728-749, and 763-775; these read ASAS…PSTR, ASTP…SGSP, and ARSR…WSPA. Residues 780–790 are compositionally biased toward polar residues; the sequence is SPTQSPSPARN. Residues 798 to 823 are compositionally biased toward basic residues; it reads KKKKKKKDKKHKKDKKHKKHKKHKKE. The span at 826–843 shows a compositional bias: low complexity; that stretch reads AVAAAPAAVAAADTTSAQ. Positions 866-876 are enriched in basic and acidic residues; the sequence is DLEKHLREKAL.

The protein belongs to the splicing factor SR family.

It is found in the nucleus. In terms of biological role, involved in pre-mRNA splicing and processing events. This is Serine/arginine repetitive matrix protein 1 (SRRM1) from Gallus gallus (Chicken).